A 275-amino-acid polypeptide reads, in one-letter code: D-apionate oxidoisomerase (275 aa).

NAD(+)-binding positions include 11 to 13 (GKM), Glu32, and Asp68. Zn(2+) is bound by residues His113 and Glu183.

Belongs to the ApnO family. Zn(2+) is required as a cofactor.

The catalysed reaction is D-apionate + NAD(+) = 3-oxoisoapionate + NADH + H(+). It participates in carbohydrate metabolism. Its function is as follows. Involved in catabolism of D-apiose. Catalyzes the conversion of D-apionate to 3-oxo-isoapionate. This Rhizobium rhizogenes (strain K84 / ATCC BAA-868) (Agrobacterium radiobacter) protein is D-apionate oxidoisomerase.